The primary structure comprises 305 residues: Protoheme IX farnesyltransferase 2 (305 aa).

The next 8 membrane-spanning stretches (helical) occupy residues 31–51 (VVML…ETWI), 53–73 (WKIL…AAVI), 103–123 (ALVF…LWVN), 125–145 (LTAL…TMYL), 152–172 (NIVI…TAVT), 179–199 (ALLL…ALAI), 231–251 (VLLA…AIYL), and 277–297 (AMKT…VLLV).

This sequence belongs to the UbiA prenyltransferase family. Protoheme IX farnesyltransferase subfamily.

The protein resides in the cell inner membrane. It carries out the reaction heme b + (2E,6E)-farnesyl diphosphate + H2O = Fe(II)-heme o + diphosphate. Its pathway is porphyrin-containing compound metabolism; heme O biosynthesis; heme O from protoheme: step 1/1. Functionally, converts heme B (protoheme IX) to heme O by substitution of the vinyl group on carbon 2 of heme B porphyrin ring with a hydroxyethyl farnesyl side group. The sequence is that of Protoheme IX farnesyltransferase 2 from Pseudoalteromonas atlantica (strain T6c / ATCC BAA-1087).